Consider the following 190-residue polypeptide: Holliday junction branch migration complex subunit RuvA (190 aa).

Residues 1–64 are domain I; it reads MIGSLTGIIE…DNLTQLYGFL (64 aa). The domain II stretch occupies residues 65-142; the sequence is DKQEQDYMRM…KMPIEETLII (78 aa). Position 143 (lysine 143) is a region of interest, flexible linker. The domain III stretch occupies residues 143-190; that stretch reads KEDDSLAALISLGYDKLKAFNAIQEIKANFPDDSIQEIIRKALQKLSQ.

This sequence belongs to the RuvA family. In terms of assembly, homotetramer. Forms an RuvA(8)-RuvB(12)-Holliday junction (HJ) complex. HJ DNA is sandwiched between 2 RuvA tetramers; dsDNA enters through RuvA and exits via RuvB. An RuvB hexamer assembles on each DNA strand where it exits the tetramer. Each RuvB hexamer is contacted by two RuvA subunits (via domain III) on 2 adjacent RuvB subunits; this complex drives branch migration. In the full resolvosome a probable DNA-RuvA(4)-RuvB(12)-RuvC(2) complex forms which resolves the HJ.

It is found in the cytoplasm. In terms of biological role, the RuvA-RuvB-RuvC complex processes Holliday junction (HJ) DNA during genetic recombination and DNA repair, while the RuvA-RuvB complex plays an important role in the rescue of blocked DNA replication forks via replication fork reversal (RFR). RuvA specifically binds to HJ cruciform DNA, conferring on it an open structure. The RuvB hexamer acts as an ATP-dependent pump, pulling dsDNA into and through the RuvAB complex. HJ branch migration allows RuvC to scan DNA until it finds its consensus sequence, where it cleaves and resolves the cruciform DNA. In Ehrlichia chaffeensis (strain ATCC CRL-10679 / Arkansas), this protein is Holliday junction branch migration complex subunit RuvA.